The chain runs to 307 residues: N-acetylmuramic acid 6-phosphate etherase (307 aa).

An SIS domain is found at 60–223 (AAQAIARGGR…STGAMVRIGK (164 aa)). The active-site Proton donor is E88. The active site involves E119.

This sequence belongs to the GCKR-like family. MurNAc-6-P etherase subfamily. Homodimer.

The enzyme catalyses N-acetyl-D-muramate 6-phosphate + H2O = N-acetyl-D-glucosamine 6-phosphate + (R)-lactate. Its pathway is amino-sugar metabolism; N-acetylmuramate degradation. Functionally, specifically catalyzes the cleavage of the D-lactyl ether substituent of MurNAc 6-phosphate, producing GlcNAc 6-phosphate and D-lactate. The sequence is that of N-acetylmuramic acid 6-phosphate etherase from Synechococcus elongatus (strain ATCC 33912 / PCC 7942 / FACHB-805) (Anacystis nidulans R2).